Here is a 439-residue protein sequence, read N- to C-terminus: Methionine aminopeptidase 2-1 (439 aa).

The segment at M1 to P87 is disordered. Acidic residues predominate over residues G22–G32. Residues K47–S61 are compositionally biased toward basic residues. Residue H190 coordinates substrate. A divalent metal cation contacts are provided by D211, D222, and H291. Residue H299 participates in substrate binding. 2 residues coordinate a divalent metal cation: E324 and E420.

It belongs to the peptidase M24A family. Methionine aminopeptidase eukaryotic type 2 subfamily. It depends on Co(2+) as a cofactor. Requires Zn(2+) as cofactor. Mn(2+) is required as a cofactor. The cofactor is Fe(2+).

The protein resides in the cytoplasm. The catalysed reaction is Release of N-terminal amino acids, preferentially methionine, from peptides and arylamides.. In terms of biological role, cotranslationally removes the N-terminal methionine from nascent proteins. The N-terminal methionine is often cleaved when the second residue in the primary sequence is small and uncharged (Met-Ala-, Cys, Gly, Pro, Ser, Thr, or Val). The protein is Methionine aminopeptidase 2-1 of Chaetomium globosum (strain ATCC 6205 / CBS 148.51 / DSM 1962 / NBRC 6347 / NRRL 1970) (Soil fungus).